Consider the following 497-residue polypeptide: MAARCWVWGFVVALLAVAAAADGEEEEGKWEPLIRMPTEEGDDAEAAAPAPAPAAADYGGTRWAVLVAGSSGYGNYRHQADVCHAYQILQKGGVKEENIVVFMYDDIAHNILNPRPGTIINHPKGGDVYAGVPKDYTGHQVTTENFFAVLLGNKTAVTGGSGKVIDSKPEDHIFIYYSDHGGPGVLGMPNLPYLYAGDFIKVLQKKHASNSYSKMVIYVEACESGSIFEGLMPENLNIYVTTASNAVENSWGTYCPGEEPSPPPEYITCLGDMYSVAWMEDSETHNLKKETIEDQYELVKKRTSNANKLNEGSHVMEYGDKTFKDEKLFLYQGFNPANGNITNELIWPVPKATVNQRDADLLFMWKRYEQLNGVSEDKLRALREIEDTIAHRKHLDSSIDFIGKLVFGFENGPLALEAARSSGQPLVDNWDCLKKMVRIFESQCGSLTQYGMKYMRAFANICNNGVSEAKMMEASINACGRYNSARWSPMTEGGHSA.

The N-terminal stretch at 1–23 (MAARCWVWGFVVALLAVAAAADG) is a signal peptide. N-linked (GlcNAc...) asparagine glycosylation occurs at Asn153. His180 is a catalytic residue. Cys222 serves as the catalytic Nucleophile. Cys255 and Cys269 are joined by a disulfide. N-linked (GlcNAc...) asparagine glycosylation is present at Asn340. 2 disulfide bridges follow: Cys432/Cys462 and Cys444/Cys479.

It belongs to the peptidase C13 family. Auto-catalytic activation. As to expression, expressed in developing seeds.

It localises to the protein storage vacuole. The catalysed reaction is Hydrolysis of proteins and small molecule substrates at -Asn-|-Xaa- bonds.. In terms of biological role, asparagine-specific endopeptidase that may be involved in processing of proteins targeted to vacuoles. Cysteine protease required for post-translational proteolysis of seed storage proteins in the protein storage vacuole (PSV) of developing seeds, by processing of proglutelin precursor to mature glutelin subunits, thus contributing to the formation of protein crystalline structures in PSV. This Oryza sativa subsp. japonica (Rice) protein is Vacuolar-processing enzyme beta-isozyme 1.